Here is an 877-residue protein sequence, read N- to C-terminus: Kinetochore null protein 2 (877 aa).

Residues 20–107 (IRLNLWSMKF…SNGIPENWAD (88 aa)) form the SANTA domain. Disordered stretches follow at residues 122 to 315 (RPIQ…SKSV), 338 to 535 (FEST…ESLN), and 549 to 604 (MMFG…NDSI). Positions 153–211 (QKNSENEKERNRREREEQQTKERERRLEEEKQRRDAEAEAERRRKEEEELEEANYTLRA) form a coiled coil. Basic and acidic residues predominate over residues 156-199 (SENEKERNRREREEQQTKERERRLEEEKQRRDAEAEAERRRKEE). Polar residues predominate over residues 251–279 (IASSTPQQKQRLADGANNQIPPTQKSQDS). 3 stretches are compositionally biased toward basic and acidic residues: residues 359–385 (EPRH…DNSR), 394–444 (RRHE…RGRD), and 453–480 (VRFE…DYGR). A coiled-coil region spans residues 491-549 (EDEEKLNAIVRREKELRNRLQKSQKASSSSYRHRSNSSDAEESLNEWDIENQELLDNSM). Low complexity predominate over residues 511–520 (QKSQKASSSS). Residues 573–583 (RSKPANSTKSP) are compositionally biased toward polar residues. Over residues 592-601 (ASLEDNRDLN) the composition is skewed to basic and acidic residues. Residues 617-678 (VAKKITWRKQ…AITRLKWVEP (62 aa)) enclose the Myb-like domain. Disordered stretches follow at residues 757–785 (RGGT…FNSP) and 808–877 (MQAR…TSIY). Polar residues-rich tracts occupy residues 775–785 (SRGNNSTFNSP) and 819–836 (SSSM…TSIS). The segment covering 856 to 871 (EDDENEDNDDDDDMRE) has biased composition (acidic residues).

Belongs to the KNL2 family. In terms of assembly, interacts with hcp-3.

It localises to the nucleus. The protein resides in the chromosome. Its subcellular location is the centromere. The protein localises to the kinetochore. Its function is as follows. Required for the recruitment of hcp-3, hcp-4, knl-1, bub-1 and lin-53 to kinetochores, kinetochore assembly, chromosome condensation and chromosome segregation in meiosis and mitosis. This is Kinetochore null protein 2 from Caenorhabditis elegans.